Reading from the N-terminus, the 301-residue chain is uncharacterized protein (301 aa).

Positions 1-21 (MKIKLILVLIVFLTIVNVNNS) are cleaved as a signal peptide. 4 N-linked (GlcNAc...) asparagine glycosylation sites follow: N19, N59, N102, and N180.

It localises to the secreted. This is an uncharacterized protein from Dictyostelium discoideum (Social amoeba).